A 259-amino-acid polypeptide reads, in one-letter code: Deoxyribose-phosphate aldolase (259 aa).

Aspartate 102 serves as the catalytic Proton donor/acceptor. Lysine 167 (schiff-base intermediate with acetaldehyde) is an active-site residue. Lysine 201 acts as the Proton donor/acceptor in catalysis.

Belongs to the DeoC/FbaB aldolase family. DeoC type 2 subfamily.

It localises to the cytoplasm. It carries out the reaction 2-deoxy-D-ribose 5-phosphate = D-glyceraldehyde 3-phosphate + acetaldehyde. It functions in the pathway carbohydrate degradation; 2-deoxy-D-ribose 1-phosphate degradation; D-glyceraldehyde 3-phosphate and acetaldehyde from 2-deoxy-alpha-D-ribose 1-phosphate: step 2/2. Catalyzes a reversible aldol reaction between acetaldehyde and D-glyceraldehyde 3-phosphate to generate 2-deoxy-D-ribose 5-phosphate. The chain is Deoxyribose-phosphate aldolase from Shigella boydii serotype 4 (strain Sb227).